We begin with the raw amino-acid sequence, 391 residues long: Arginine biosynthesis bifunctional protein ArgJ (391 aa).

The substrate site is built by threonine 149, lysine 172, threonine 183, glutamate 263, asparagine 386, and serine 391. Threonine 183 functions as the Nucleophile in the catalytic mechanism.

It belongs to the ArgJ family. Heterotetramer of two alpha and two beta chains.

The protein localises to the cytoplasm. The enzyme catalyses N(2)-acetyl-L-ornithine + L-glutamate = N-acetyl-L-glutamate + L-ornithine. It carries out the reaction L-glutamate + acetyl-CoA = N-acetyl-L-glutamate + CoA + H(+). Its pathway is amino-acid biosynthesis; L-arginine biosynthesis; L-ornithine and N-acetyl-L-glutamate from L-glutamate and N(2)-acetyl-L-ornithine (cyclic): step 1/1. It functions in the pathway amino-acid biosynthesis; L-arginine biosynthesis; N(2)-acetyl-L-ornithine from L-glutamate: step 1/4. Catalyzes two activities which are involved in the cyclic version of arginine biosynthesis: the synthesis of N-acetylglutamate from glutamate and acetyl-CoA as the acetyl donor, and of ornithine by transacetylation between N(2)-acetylornithine and glutamate. The polypeptide is Arginine biosynthesis bifunctional protein ArgJ (Bifidobacterium longum (strain NCC 2705)).